The chain runs to 612 residues: FAD-linked oxidoreductase easE (612 aa).

The region spanning 129 to 313 (HQGRIPLYSA…TRATMRVFPD (185 aa)) is the FAD-binding PCMH-type domain.

Belongs to the oxygen-dependent FAD-linked oxidoreductase family. Requires FAD as cofactor.

It functions in the pathway alkaloid biosynthesis; ergot alkaloid biosynthesis. Its function is as follows. FAD-linked oxidoreductase; part of the gene cluster that mediates the biosynthesis of fungal ergot alkaloid. DmaW catalyzes the first step of ergot alkaloid biosynthesis by condensing dimethylallyl diphosphate (DMAP) and tryptophan to form 4-dimethylallyl-L-tryptophan. The second step is catalyzed by the methyltransferase easF that methylates 4-dimethylallyl-L-tryptophan in the presence of S-adenosyl-L-methionine, resulting in the formation of 4-dimethylallyl-L-abrine. The catalase easC and the FAD-dependent oxidoreductase easE then transform 4-dimethylallyl-L-abrine to chanoclavine-I which is further oxidized by easD in the presence of NAD(+), resulting in the formation of chanoclavine-I aldehyde. Chanoclavine-I aldehyde is the precursor of ergoamides and ergopeptines in Clavicipitaceae, and clavine-type alcaloids such as fumiclavine in Trichocomaceae. However, the metabolites downstream of chanoclavine-I aldehyde in Arthrodermataceae have not been identified yet. This is FAD-linked oxidoreductase easE from Arthroderma otae (strain ATCC MYA-4605 / CBS 113480) (Microsporum canis).